The following is a 60-amino-acid chain: Potassium channel toxin alpha-KTx 15.9 (60 aa).

An N-terminal signal peptide occupies residues 1 to 22 (MKIFLPVLVMLILCSMCLLTEG). Intrachain disulfides connect C30–C51, C36–C56, and C40–C58.

The protein belongs to the short scorpion toxin superfamily. Potassium channel inhibitor family. Alpha-KTx 15 subfamily. As to expression, expressed by the venom gland.

Its subcellular location is the secreted. Its function is as follows. Blocker of A-type voltage-gated potassium channels of cerebellar granular cells. May also inhibit Kv4/KCND when coexpressed with DPP6 or DPP10. The occlusion of the outer entry of the K(+) conducting pore is partially reversible and affects both open and closed channels. It shares the same target in rat brain than BmTX3 (AC Q8I0L5) and AmmTX3 (AC P60208). Has been shown to weakly inhibit TRPV1 channels. This Lychas mucronatus (Chinese swimming scorpion) protein is Potassium channel toxin alpha-KTx 15.9.